The chain runs to 277 residues: Probable septum site-determining protein MinC (277 aa).

The tract at residues 107-168 is disordered; the sequence is TEGLLPGRKG…ESGPQVSHYD (62 aa). Over residues 122-142 the composition is skewed to basic and acidic residues; that stretch reads GKPDGKAAEGRAPDHGTEGRA.

The protein belongs to the MinC family. In terms of assembly, interacts with MinD and FtsZ.

Functionally, cell division inhibitor that blocks the formation of polar Z ring septums. Rapidly oscillates between the poles of the cell to destabilize FtsZ filaments that have formed before they mature into polar Z rings. Prevents FtsZ polymerization. In Mesorhizobium japonicum (strain LMG 29417 / CECT 9101 / MAFF 303099) (Mesorhizobium loti (strain MAFF 303099)), this protein is Probable septum site-determining protein MinC.